The following is a 240-amino-acid chain: Probable metal transport system ATP-binding protein TM_0124 (240 aa).

The 220-residue stretch at 4 to 223 folds into the ABC transporter domain; the sequence is VEVKNLTYRI…LKKIFTDFDI (220 aa). 36 to 43 contributes to the ATP binding site; sequence GPNGAGKT.

This sequence belongs to the ABC transporter superfamily.

Part of an ATP-driven transport system TM_0123/TM_0124/TM_0125 for a metal. Probably responsible for energy coupling to the transport system. In Thermotoga maritima (strain ATCC 43589 / DSM 3109 / JCM 10099 / NBRC 100826 / MSB8), this protein is Probable metal transport system ATP-binding protein TM_0124.